The chain runs to 257 residues: 3-dehydroquinate dehydratase (257 aa).

3-dehydroquinate-binding positions include 50–52 and Arg-86; that span reads EWR. The active-site Proton donor/acceptor is the His-147. The active-site Schiff-base intermediate with substrate is Lys-174. 3-dehydroquinate is bound by residues Arg-216, Ser-235, and Gln-239.

Belongs to the type-I 3-dehydroquinase family. As to quaternary structure, homodimer.

The enzyme catalyses 3-dehydroquinate = 3-dehydroshikimate + H2O. Its pathway is metabolic intermediate biosynthesis; chorismate biosynthesis; chorismate from D-erythrose 4-phosphate and phosphoenolpyruvate: step 3/7. Involved in the third step of the chorismate pathway, which leads to the biosynthesis of aromatic amino acids. Catalyzes the cis-dehydration of 3-dehydroquinate (DHQ) and introduces the first double bond of the aromatic ring to yield 3-dehydroshikimate. The sequence is that of 3-dehydroquinate dehydratase from Geobacillus kaustophilus (strain HTA426).